We begin with the raw amino-acid sequence, 267 residues long: Outer membrane protein assembly factor BamD (267 aa).

Residues 1-16 (MKKILLTVSLGLALSA) form the signal peptide. C17 carries the N-palmitoyl cysteine lipid modification. C17 carries the S-diacylglycerol cysteine lipid modification.

Belongs to the BamD family. As to quaternary structure, part of the Bam complex.

It is found in the cell outer membrane. In terms of biological role, part of the outer membrane protein assembly complex, which is involved in assembly and insertion of beta-barrel proteins into the outer membrane. Required for efficient transformation of Neisseria meningitidis by species-related DNA. The sequence is that of Outer membrane protein assembly factor BamD from Neisseria meningitidis serogroup B (strain ATCC BAA-335 / MC58).